The primary structure comprises 347 residues: NADH-ubiquinone oxidoreductase chain 2 (347 aa).

Helical transmembrane passes span 3-23, 59-79, 89-109, 150-170, 178-198, 201-221, 237-257, 276-296, and 326-346; these read PMTF…VMMS, YFLT…INLL, LINP…LGLA, NLNI…WGGL, IMAY…MYNP, MLLN…LLMI, LPLI…LPPL, IILS…YTRI, and LPLM…TAIL.

The protein belongs to the complex I subunit 2 family. Core subunit of respiratory chain NADH dehydrogenase (Complex I) which is composed of 45 different subunits. Interacts with TMEM242.

The protein resides in the mitochondrion inner membrane. It catalyses the reaction a ubiquinone + NADH + 5 H(+)(in) = a ubiquinol + NAD(+) + 4 H(+)(out). Functionally, core subunit of the mitochondrial membrane respiratory chain NADH dehydrogenase (Complex I) which catalyzes electron transfer from NADH through the respiratory chain, using ubiquinone as an electron acceptor. Essential for the catalytic activity and assembly of complex I. This Nyctophilus arnhemensis (Northern long-eared bat) protein is NADH-ubiquinone oxidoreductase chain 2.